A 920-amino-acid polypeptide reads, in one-letter code: Zinc finger MIZ domain-containing protein 2 (920 aa).

Disordered regions lie at residues 1 to 22 (MNSMNPMKPALPPAPHGDGSFA) and 54 to 79 (SQVLGNPMGPAGSPSGSSMMPGVAGG). Low complexity predominate over residues 60-79 (PMGPAGSPSGSSMMPGVAGG). R111 carries the post-translational modification Omega-N-methylarginine. Disordered regions lie at residues 243-265 (GQRLPQHGYPGPPQAQPLPRQGV) and 286-391 (PSTA…SPNQ). R245 and R262 each carry asymmetric dimethylarginine. Over residues 295–304 (PGQPPAPSPS) the composition is skewed to pro residues. Residues 334-354 (EQFNGQGASFNGGSVSYSQPG) show a composition bias toward polar residues. The span at 366-379 (PSSPLPGNPTPPMT) shows a compositional bias: pro residues. Low complexity predominate over residues 380–389 (PSSSVPYMSP). Glycyl lysine isopeptide (Lys-Gly) (interchain with G-Cter in SUMO2) cross-links involve residues K402 and K457. The interval 435-506 (PFRLQHNLAV…TIERGDNKTS (72 aa)) is interaction with AR. Residues 585–671 (GEDGVEQTAI…IYIQNSDYEE (87 aa)) form an SP-RING-type zinc finger. 4 residues coordinate Zn(2+): C616, H618, C639, and C642. Residue K692 forms a Glycyl lysine isopeptide (Lys-Gly) (interchain with G-Cter in SUMO2) linkage. Residues 803–920 (SQMAPAGHLD…DDLLSLFENN (118 aa)) form a disordered region. Residues 876–890 (AGEAPEPALDLLPEL) are compositionally biased toward low complexity. Positions 906–920 (PTNNNDDLLSLFENN) are enriched in polar residues.

In terms of assembly, interacts with AR, SMARCA4/BRG1 and SMARCE1/BAF57. Interaction with either SMARCA4 and SMARCE1 enhances AR-mediated transcription. As to expression, expressed most abundantly in testis with lower levels in heart, brain, pancreas, prostate and ovary.

It localises to the nucleus. Its function is as follows. Increases ligand-dependent transcriptional activity of AR and other nuclear hormone receptors. The protein is Zinc finger MIZ domain-containing protein 2 (ZMIZ2) of Homo sapiens (Human).